The following is a 445-amino-acid chain: Phosphoglucosamine mutase (445 aa).

Residue Ser102 is the Phosphoserine intermediate of the active site. Residues Ser102, Asp241, Asp243, and Asp245 each contribute to the Mg(2+) site. Ser102 is subject to Phosphoserine.

This sequence belongs to the phosphohexose mutase family. It depends on Mg(2+) as a cofactor. In terms of processing, activated by phosphorylation.

It catalyses the reaction alpha-D-glucosamine 1-phosphate = D-glucosamine 6-phosphate. In terms of biological role, catalyzes the conversion of glucosamine-6-phosphate to glucosamine-1-phosphate. In Shigella boydii serotype 4 (strain Sb227), this protein is Phosphoglucosamine mutase.